We begin with the raw amino-acid sequence, 341 residues long: Serpentine receptor class beta-3 (341 aa).

Over 1–23 (MLETNDSVCELAYQLAYHPVYRS) the chain is Extracellular. N-linked (GlcNAc...) asparagine glycosylation is present at Asn-5. The helical transmembrane segment at 24–44 (SQFWSMLVSSLSIPALIYFIT) threads the bilayer. Residues 45–58 (RKIFFLHFHGNLKC) lie on the Cytoplasmic side of the membrane. A helical membrane pass occupies residues 59–79 (LLIVYFICNLLFSMALCFAFF). At 80-103 (YQFLIPFFVTSKCQLLINTTLFKW) the chain is on the extracellular side. N-linked (GlcNAc...) asparagine glycosylation occurs at Asn-97. Residues 104–124 (GQICSFLLLTSSMLLPIGFSI) traverse the membrane as a helical segment. The Cytoplasmic portion of the chain corresponds to 125–141 (ERFVALGNAQKYESSRT). The chain crosses the membrane as a helical span at residues 142 to 162 (FLGPVIIFIIIAVDFSIIFSV). Over 163-187 (YKNEPFTEGFYSFILVPSTTASQIN) the chain is Extracellular. A helical membrane pass occupies residues 188 to 208 (MYFFVLLFVKIFNLLLNCILL). Over 209–237 (RIHKKIRIKYYSLSVRYEMEEILQSSKFT) the chain is Cytoplasmic. A helical membrane pass occupies residues 238-258 (FIIRFTHLLFFGFYVVVILFV). Residues 259–276 (RIMGESFFNGTLNYSVAR) lie on the Extracellular side of the membrane. Residues Asn-267 and Asn-271 are each glycosylated (N-linked (GlcNAc...) asparagine). A helical transmembrane segment spans residues 277–297 (GVFCTVPTYNLIIVIIGIKSL). The Cytoplasmic portion of the chain corresponds to 298–341 (RHLNLQRLNKVQSTVQIKSTGKEGSKNYEDIITNYWDSVSSRTP).

Belongs to the nematode receptor-like protein srb family. As to expression, expressed throughout the head.

The protein localises to the cell membrane. It localises to the perikaryon. It is found in the cell projection. Its subcellular location is the dendrite. In terms of biological role, G-protein coupled receptor. This is Serpentine receptor class beta-3 from Caenorhabditis elegans.